The following is a 430-amino-acid chain: Glutamate-1-semialdehyde 2,1-aminomutase (430 aa).

Residue Lys-270 is modified to N6-(pyridoxal phosphate)lysine.

This sequence belongs to the class-III pyridoxal-phosphate-dependent aminotransferase family. HemL subfamily. Homodimer. Pyridoxal 5'-phosphate serves as cofactor.

It localises to the cytoplasm. The catalysed reaction is (S)-4-amino-5-oxopentanoate = 5-aminolevulinate. It functions in the pathway porphyrin-containing compound metabolism; protoporphyrin-IX biosynthesis; 5-aminolevulinate from L-glutamyl-tRNA(Glu): step 2/2. This is Glutamate-1-semialdehyde 2,1-aminomutase from Cupriavidus metallidurans (strain ATCC 43123 / DSM 2839 / NBRC 102507 / CH34) (Ralstonia metallidurans).